Here is a 571-residue protein sequence, read N- to C-terminus: Leiomodin-3 (571 aa).

Disordered regions lie at residues 1–29 (MSGH…NLSP), 46–67 (PHLP…GNFN), and 91–228 (PVSF…AKLD). A compositionally biased stretch (acidic residues) spans 10–23 (QEDTLSEELDEDEL). The segment covering 94 to 105 (FVQSEKNTQNQR) has biased composition (polar residues). The span at 119 to 134 (LKEKLNSEILAKKRES) shows a compositional bias: basic and acidic residues. A compositionally biased stretch (acidic residues) spans 142–179 (EAEDDDEDEEEEEEDDEDEEEEEEDEEDDEGEEDEDGE). Over residues 180–192 (QANREKNDAKEQI) the composition is skewed to basic and acidic residues. Positions 193-204 (HNNPGTYQQLAT) are enriched in polar residues. The segment covering 206–228 (TAHEQKDTSETKEKGEKKIAKLD) has biased composition (basic and acidic residues). The stretch at 397 to 436 (VTNLLTRNQDKRRQKRQEEQQQQQLKEQRKLIAMLENGLG) forms a coiled coil. Residues 545–564 (PRDQLLNDIRHSNVAYLKPV) form the WH2 domain.

This sequence belongs to the tropomodulin family. In terms of assembly, may interact with tropomyosin alpha (TPM1/2) N-terminus. Interacts with KLHL40; leading to stabilization. In terms of processing, ubiquitinated, leading to its degradation. Interaction with KLHL40 negatively regulates ubiquitination and degradation. As to expression, skeletal muscle and heart-specific (at protein level).

The protein localises to the cytoplasm. It localises to the myofibril. The protein resides in the sarcomere. Its subcellular location is the a band. It is found in the m line. The protein localises to the cytoskeleton. Essential for the organization of sarcomeric actin thin filaments in skeletal muscle. Increases the rate of actin polymerization. In Mus musculus (Mouse), this protein is Leiomodin-3.